A 79-amino-acid polypeptide reads, in one-letter code: uncharacterized protein (79 aa).

The protein resides in the mitochondrion. This is an uncharacterized protein from Marchantia polymorpha (Common liverwort).